The following is a 470-amino-acid chain: Ribulose bisphosphate carboxylase large chain (470 aa).

Positions 115 and 165 each coordinate substrate. Lys167 acts as the Proton acceptor in catalysis. Lys169 lines the substrate pocket. Lys193, Asp195, and Glu196 together coordinate Mg(2+). An N6-carboxylysine modification is found at Lys193. His286 (proton acceptor) is an active-site residue. Substrate is bound by residues Arg287, His319, and Ser371.

Belongs to the RuBisCO large chain family. Type I subfamily. Heterohexadecamer of 8 large chains and 8 small chains. Forms a CsoS2-CsoS1-RuBisCO complex. The cofactor is Mg(2+).

It localises to the carboxysome. It catalyses the reaction 2 (2R)-3-phosphoglycerate + 2 H(+) = D-ribulose 1,5-bisphosphate + CO2 + H2O. It carries out the reaction D-ribulose 1,5-bisphosphate + O2 = 2-phosphoglycolate + (2R)-3-phosphoglycerate + 2 H(+). RuBisCO catalyzes two reactions: the carboxylation of D-ribulose 1,5-bisphosphate, the primary event in carbon dioxide fixation, as well as the oxidative fragmentation of the pentose substrate in the photorespiration process. Both reactions occur simultaneously and in competition at the same active site. The sequence is that of Ribulose bisphosphate carboxylase large chain from Prochlorococcus marinus (strain MIT 9313).